The following is a 77-amino-acid chain: Serine protease inhibitor 3 (77 aa).

The first 17 residues, 1 to 17 (MMFTPLIVLTLLVLATA), serve as a signal peptide directing secretion. 4 disulfide bridges follow: C21–C53, C30–C48, C33–C44, and C55–C68. In terms of domain architecture, TIL spans 21-74 (CGPNEQWSGCPKCELQSGESDKPCATICGEPKCYCSPDKYRRIPDGRCIRKIQC).

It localises to the secreted. Its function is as follows. Defends the organism against the host's proteinases. In Anisakis simplex (Herring worm), this protein is Serine protease inhibitor 3.